The primary structure comprises 320 residues: Ubiquitin-like domain-containing CTD phosphatase 1 (320 aa).

In terms of domain architecture, Ubiquitin-like spans 6–77 (VVVIVKWSGK…LKPNFKLMMV (72 aa)). Residues 136–296 (PREGKKLLVL…LKLSDYLRKI (161 aa)) form the FCP1 homology domain. Aspartate 146, aspartate 148, and aspartate 255 together coordinate Mg(2+).

Requires Mg(2+) as cofactor.

The protein localises to the nucleus. It carries out the reaction O-phospho-L-seryl-[protein] + H2O = L-seryl-[protein] + phosphate. It catalyses the reaction O-phospho-L-threonyl-[protein] + H2O = L-threonyl-[protein] + phosphate. Its function is as follows. Dephosphorylates 26S nuclear proteasomes, thereby decreasing their proteolytic activity. Recruited to the 19S regulatory particle of the 26S proteasome where it dephosphorylates 19S component Rpt1 which impairs Rpt1 ATPase activity and disrupts 26S proteasome assembly. The protein is Ubiquitin-like domain-containing CTD phosphatase 1 of Drosophila melanogaster (Fruit fly).